The primary structure comprises 493 residues: Glycerol kinase (493 aa).

Residue Thr11 participates in ADP binding. Thr11, Thr12, and Ser13 together coordinate ATP. Thr11 is a binding site for sn-glycerol 3-phosphate. Arg15 is an ADP binding site. Positions 80, 81, 132, and 241 each coordinate sn-glycerol 3-phosphate. Glycerol-binding residues include Arg80, Glu81, Tyr132, Asp241, and Gln242. Thr263 and Gly306 together coordinate ADP. ATP is bound by residues Thr263, Gly306, Gln310, and Gly408. Gly408 contacts ADP.

Belongs to the FGGY kinase family.

It catalyses the reaction glycerol + ATP = sn-glycerol 3-phosphate + ADP + H(+). The protein operates within polyol metabolism; glycerol degradation via glycerol kinase pathway; sn-glycerol 3-phosphate from glycerol: step 1/1. With respect to regulation, inhibited by fructose 1,6-bisphosphate (FBP). Its function is as follows. Key enzyme in the regulation of glycerol uptake and metabolism. Catalyzes the phosphorylation of glycerol to yield sn-glycerol 3-phosphate. In Cereibacter sphaeroides (strain ATCC 17029 / ATH 2.4.9) (Rhodobacter sphaeroides), this protein is Glycerol kinase.